Here is a 168-residue protein sequence, read N- to C-terminus: Gremlin-2 (168 aa).

The N-terminal stretch at 1 to 21 is a signal peptide; it reads MFWKLSLSLFLVAVLVKVAEA. N-linked (GlcNAc...) asparagine glycosylation is present at asparagine 40. Disulfide bonds link cysteine 73–cysteine 123, cysteine 87–cysteine 137, cysteine 97–cysteine 155, and cysteine 101–cysteine 157. Residues 73–163 form the CTCK domain; sequence CKTQPLRQTV…QCRCMSVNLS (91 aa). Asparagine 161 carries an N-linked (GlcNAc...) asparagine glycan.

The protein belongs to the DAN family. In terms of assembly, homodimer. Interacts with BMP2, BMP4 and BMP7, but has lower affinity for BMP7 than for BMP2 and BMP4. Binds heparin; this impairs the interaction with BMP2. N-glycosylated.

Its subcellular location is the secreted. Cytokine that inhibits the activity of BMP2 and BMP4 in a dose-dependent manner, and thereby modulates signaling by BMP family members. Contributes to the regulation of embryonic morphogenesis via BMP family members. Antagonizes BMP4-induced suppression of progesterone production in granulosa cells. In Homo sapiens (Human), this protein is Gremlin-2 (GREM2).